Reading from the N-terminus, the 202-residue chain is Large ribosomal subunit protein uL13 (202 aa).

Belongs to the universal ribosomal protein uL13 family. As to quaternary structure, component of the large ribosomal subunit (LSU). Mature N.crassa ribosomes consist of a small (40S) and a large (60S) subunit. The 40S small subunit contains 1 molecule of ribosomal RNA (18S rRNA) and at least 32 different proteins. The large 60S subunit contains 3 rRNA molecules (26S, 5.8S and 5S rRNA) and at least 42 different proteins.

The protein localises to the cytoplasm. Its function is as follows. Component of the ribosome, a large ribonucleoprotein complex responsible for the synthesis of proteins in the cell. The small ribosomal subunit (SSU) binds messenger RNAs (mRNAs) and translates the encoded message by selecting cognate aminoacyl-transfer RNA (tRNA) molecules. The large subunit (LSU) contains the ribosomal catalytic site termed the peptidyl transferase center (PTC), which catalyzes the formation of peptide bonds, thereby polymerizing the amino acids delivered by tRNAs into a polypeptide chain. The nascent polypeptides leave the ribosome through a tunnel in the LSU and interact with protein factors that function in enzymatic processing, targeting, and the membrane insertion of nascent chains at the exit of the ribosomal tunnel. This chain is Large ribosomal subunit protein uL13 (crp-46), found in Neurospora crassa (strain ATCC 24698 / 74-OR23-1A / CBS 708.71 / DSM 1257 / FGSC 987).